The primary structure comprises 415 residues: SVF1-like protein YDR222W (415 aa).

The protein belongs to the SVF1 family.

The protein resides in the cytoplasm. This chain is SVF1-like protein YDR222W, found in Saccharomyces cerevisiae (strain ATCC 204508 / S288c) (Baker's yeast).